The chain runs to 106 residues: Small ribosomal subunit protein uS17 (106 aa).

Belongs to the universal ribosomal protein uS17 family. In terms of assembly, part of the 30S ribosomal subunit.

Its function is as follows. One of the primary rRNA binding proteins, it binds specifically to the 5'-end of 16S ribosomal RNA. The sequence is that of Small ribosomal subunit protein uS17 from Methanosphaera stadtmanae (strain ATCC 43021 / DSM 3091 / JCM 11832 / MCB-3).